Here is a 164-residue protein sequence, read N- to C-terminus: Protein eva-1 homolog B (164 aa).

Residues G29–I49 form a helical membrane-spanning segment. The interval R56–S110 is disordered. The span at E74 to D85 shows a compositional bias: acidic residues. Phosphothreonine occurs at positions 86, 149, and 157.

This sequence belongs to the EVA1 family.

The protein resides in the membrane. This is Protein eva-1 homolog B (Eva1b) from Mus musculus (Mouse).